The sequence spans 279 residues: Presqualene diphosphate synthase (279 aa).

This sequence belongs to the phytoene/squalene synthase family. HpnD subfamily.

It carries out the reaction 2 (2E,6E)-farnesyl diphosphate = presqualene diphosphate + diphosphate. The protein operates within secondary metabolite biosynthesis; hopanoid biosynthesis. Its function is as follows. Involved in the biosynthesis of the hopanoid precursor squalene (SQ) from farnesyl diphosphate (FPP). Catalyzes the first step, the formation of presqualene diphosphate (PSPP) from two molecules of FPP. In Rhodopseudomonas palustris (strain ATCC BAA-98 / CGA009), this protein is Presqualene diphosphate synthase.